A 562-amino-acid polypeptide reads, in one-letter code: Dihydroxy-acid dehydratase (562 aa).

Asp-80 provides a ligand contact to Mg(2+). Position 121 (Cys-121) interacts with [2Fe-2S] cluster. Mg(2+) contacts are provided by Asp-122 and Lys-123. N6-carboxylysine is present on Lys-123. Cys-194 lines the [2Fe-2S] cluster pocket. Residue Glu-446 coordinates Mg(2+). Ser-472 serves as the catalytic Proton acceptor.

This sequence belongs to the IlvD/Edd family. As to quaternary structure, homodimer. [2Fe-2S] cluster serves as cofactor. Requires Mg(2+) as cofactor.

The enzyme catalyses (2R)-2,3-dihydroxy-3-methylbutanoate = 3-methyl-2-oxobutanoate + H2O. It carries out the reaction (2R,3R)-2,3-dihydroxy-3-methylpentanoate = (S)-3-methyl-2-oxopentanoate + H2O. It participates in amino-acid biosynthesis; L-isoleucine biosynthesis; L-isoleucine from 2-oxobutanoate: step 3/4. Its pathway is amino-acid biosynthesis; L-valine biosynthesis; L-valine from pyruvate: step 3/4. Functionally, functions in the biosynthesis of branched-chain amino acids. Catalyzes the dehydration of (2R,3R)-2,3-dihydroxy-3-methylpentanoate (2,3-dihydroxy-3-methylvalerate) into 2-oxo-3-methylpentanoate (2-oxo-3-methylvalerate) and of (2R)-2,3-dihydroxy-3-methylbutanoate (2,3-dihydroxyisovalerate) into 2-oxo-3-methylbutanoate (2-oxoisovalerate), the penultimate precursor to L-isoleucine and L-valine, respectively. The chain is Dihydroxy-acid dehydratase from Staphylococcus aureus (strain Mu50 / ATCC 700699).